Consider the following 120-residue polypeptide: Aspartate 1-decarboxylase (120 aa).

Serine 25 functions as the Schiff-base intermediate with substrate; via pyruvic acid in the catalytic mechanism. The residue at position 25 (serine 25) is a Pyruvic acid (Ser). Threonine 57 contributes to the substrate binding site. Residue tyrosine 58 is the Proton donor of the active site. 73–75 (GAA) is a substrate binding site.

This sequence belongs to the PanD family. In terms of assembly, heterooctamer of four alpha and four beta subunits. Pyruvate is required as a cofactor. Post-translationally, is synthesized initially as an inactive proenzyme, which is activated by self-cleavage at a specific serine bond to produce a beta-subunit with a hydroxyl group at its C-terminus and an alpha-subunit with a pyruvoyl group at its N-terminus.

It localises to the cytoplasm. The enzyme catalyses L-aspartate + H(+) = beta-alanine + CO2. Its pathway is cofactor biosynthesis; (R)-pantothenate biosynthesis; beta-alanine from L-aspartate: step 1/1. Catalyzes the pyruvoyl-dependent decarboxylation of aspartate to produce beta-alanine. This Deinococcus geothermalis (strain DSM 11300 / CIP 105573 / AG-3a) protein is Aspartate 1-decarboxylase.